A 476-amino-acid polypeptide reads, in one-letter code: Bifunctional protein HldE (476 aa).

Residues 1-318 (MKPTLPNYDQ…AEAIHGSQDS (318 aa)) are ribokinase. ATP is bound at residue 195 to 198 (NMLE). Residue Asp264 is part of the active site. Positions 344 to 476 (MTNGCFDILH…IIEAIKGGRG (133 aa)) are cytidylyltransferase.

This sequence in the N-terminal section; belongs to the carbohydrate kinase PfkB family. The protein in the C-terminal section; belongs to the cytidylyltransferase family. Homodimer.

It carries out the reaction D-glycero-beta-D-manno-heptose 7-phosphate + ATP = D-glycero-beta-D-manno-heptose 1,7-bisphosphate + ADP + H(+). It catalyses the reaction D-glycero-beta-D-manno-heptose 1-phosphate + ATP + H(+) = ADP-D-glycero-beta-D-manno-heptose + diphosphate. It participates in nucleotide-sugar biosynthesis; ADP-L-glycero-beta-D-manno-heptose biosynthesis; ADP-L-glycero-beta-D-manno-heptose from D-glycero-beta-D-manno-heptose 7-phosphate: step 1/4. The protein operates within nucleotide-sugar biosynthesis; ADP-L-glycero-beta-D-manno-heptose biosynthesis; ADP-L-glycero-beta-D-manno-heptose from D-glycero-beta-D-manno-heptose 7-phosphate: step 3/4. Its function is as follows. Catalyzes the phosphorylation of D-glycero-D-manno-heptose 7-phosphate at the C-1 position to selectively form D-glycero-beta-D-manno-heptose-1,7-bisphosphate. In terms of biological role, catalyzes the ADP transfer from ATP to D-glycero-beta-D-manno-heptose 1-phosphate, yielding ADP-D-glycero-beta-D-manno-heptose. This Aliivibrio fischeri (strain MJ11) (Vibrio fischeri) protein is Bifunctional protein HldE.